The primary structure comprises 575 residues: Arginine--tRNA ligase (575 aa).

The 'HIGH' region signature appears at 122–132 (PNVAKEMHVGH).

It belongs to the class-I aminoacyl-tRNA synthetase family. In terms of assembly, monomer.

The protein resides in the cytoplasm. It catalyses the reaction tRNA(Arg) + L-arginine + ATP = L-arginyl-tRNA(Arg) + AMP + diphosphate. The sequence is that of Arginine--tRNA ligase from Actinobacillus succinogenes (strain ATCC 55618 / DSM 22257 / CCUG 43843 / 130Z).